The primary structure comprises 475 residues: Aspartyl/glutamyl-tRNA(Asn/Gln) amidotransferase subunit B (475 aa).

This sequence belongs to the GatB/GatE family. GatB subfamily. As to quaternary structure, heterotrimer of A, B and C subunits.

It carries out the reaction L-glutamyl-tRNA(Gln) + L-glutamine + ATP + H2O = L-glutaminyl-tRNA(Gln) + L-glutamate + ADP + phosphate + H(+). The enzyme catalyses L-aspartyl-tRNA(Asn) + L-glutamine + ATP + H2O = L-asparaginyl-tRNA(Asn) + L-glutamate + ADP + phosphate + 2 H(+). In terms of biological role, allows the formation of correctly charged Asn-tRNA(Asn) or Gln-tRNA(Gln) through the transamidation of misacylated Asp-tRNA(Asn) or Glu-tRNA(Gln) in organisms which lack either or both of asparaginyl-tRNA or glutaminyl-tRNA synthetases. The reaction takes place in the presence of glutamine and ATP through an activated phospho-Asp-tRNA(Asn) or phospho-Glu-tRNA(Gln). This chain is Aspartyl/glutamyl-tRNA(Asn/Gln) amidotransferase subunit B, found in Bacillus cereus (strain B4264).